A 251-amino-acid chain; its full sequence is Meso-2,3-butanediol dehydrogenase (251 aa).

NAD(+) contacts are provided by Asn15, Met17, Asp36, Asp60, Val61, and Asn87. (R)-acetoin is bound by residues Ser138, Ser140, and Tyr151. (S)-acetoin is bound at residue Ser138. Residues Tyr151, Lys155, Val184, and Thr186 each contribute to the NAD(+) site. A (S)-acetoin-binding site is contributed by Tyr151. The active-site Proton acceptor is the Tyr151.

The protein belongs to the short-chain dehydrogenases/reductases (SDR) family. In terms of assembly, homotetramer; dimer of dimers.

It carries out the reaction (R,S)-butane-2,3-diol + NAD(+) = (R)-acetoin + NADH + H(+). It catalyses the reaction (S,S)-butane-2,3-diol + NAD(+) = (S)-acetoin + NADH + H(+). The enzyme catalyses (S)-acetoin + NAD(+) = diacetyl + NADH + H(+). Its activity is regulated as follows. Oxidation of meso-2,3-butanediol is enhanced in the presence of Fe(2+). Reduction of diacetyl and (3S/3R)-acetoin is slightly enhanced in the presence of Mg(2+) and Mn(2+). Activity is inhibited by several metal ions, particularly Fe(3+) for reduction of diacetyl and acetoin. Its function is as follows. Catalyzes the NAD-dependent oxidation of meso-2,3-butanediol to (3R)-acetoin, and of (2S,3S)-2,3-butanediol to (3S)-acetoin, with much lower efficiency. Can also oxidize several primary alcohols such as glycerol, 1-2-pentanediol and 1,2-propanediol, with lower activity. Cannot use (2R,3R)-2,3-butanediol. In the presence of NADH, catalyzes the reduction of (3R)-acetoin to meso-2,3-butanediol, of (3S)-acetoin to (2S,3S)-2,3-butanediol and of diacetyl to (3S)-acetoin. No activity is detected with NADPH/NADP(+). The chain is Meso-2,3-butanediol dehydrogenase from Serratia marcescens.